The following is a 314-amino-acid chain: Homoserine kinase (314 aa).

Residue 95-105 (PHSRGLGSSAA) coordinates ATP.

It belongs to the GHMP kinase family. Homoserine kinase subfamily.

Its subcellular location is the cytoplasm. The enzyme catalyses L-homoserine + ATP = O-phospho-L-homoserine + ADP + H(+). The protein operates within amino-acid biosynthesis; L-threonine biosynthesis; L-threonine from L-aspartate: step 4/5. In terms of biological role, catalyzes the ATP-dependent phosphorylation of L-homoserine to L-homoserine phosphate. This chain is Homoserine kinase, found in Mycobacterium sp. (strain JLS).